The chain runs to 163 residues: Myosin light chain 2 (163 aa).

EF-hand domains follow at residues 15 to 50 and 92 to 127; these read DYINKLKDAFQMLDEDEDGLISRGDLTKIYATLGKT and PEREELEESLKAIGRGHDLNVPLNEVIDSLKEAGFE. Positions 28, 30, 32, and 39 each coordinate Ca(2+).

Interacts with the IQ domain of MYO1.

Its subcellular location is the bud neck. Functionally, regulatory light chain for the class II conventional myosin MYO1. May play a role in the disassembly of the MYO1 ring at the bud neck at the end of its contraction during cytokinesis. This Saccharomyces cerevisiae (strain ATCC 204508 / S288c) (Baker's yeast) protein is Myosin light chain 2 (MLC2).